The following is a 1029-amino-acid chain: Endosome/lysosome-associated apoptosis and autophagy regulator family member 2 (1029 aa).

The N-terminal stretch at M1–A47 is a signal peptide. Residues G48 to K929 are Extracellular-facing. An N-linked (GlcNAc...) asparagine glycan is attached at N169. Cystine bridges form between C293–C310, C323–C346, and C326–C358. N-linked (GlcNAc...) asparagine glycosylation is found at N405 and N691. The 206-residue stretch at S672–L877 folds into the MRH domain. 4 disulfide bridges follow: C674–C720, C730–C758, C827–C863, and C839–C875. The helical transmembrane segment at V930–W950 threads the bilayer. The Cytoplasmic portion of the chain corresponds to K951–I1029. S1018 is subject to Phosphoserine.

Belongs to the ELAPOR family.

The protein localises to the cell membrane. Its function is as follows. Functions as a regulator of the BMP signaling pathway and may be involved in epidermal differentiation. The protein is Endosome/lysosome-associated apoptosis and autophagy regulator family member 2 of Homo sapiens (Human).